Reading from the N-terminus, the 240-residue chain is Methylthioribulose-1-phosphate dehydratase (240 aa).

Positions 1–10 are enriched in basic and acidic residues; it reads MAQEIEKTNN. Residues 1–20 form a disordered region; sequence MAQEIEKTNNDHLVQSSDPE. A substrate-binding site is contributed by cysteine 100. The Zn(2+) site is built by histidine 117 and histidine 119. Glutamate 146 serves as the catalytic Proton donor/acceptor. Histidine 202 provides a ligand contact to Zn(2+).

Belongs to the aldolase class II family. MtnB subfamily. It depends on Zn(2+) as a cofactor.

The protein resides in the cytoplasm. The catalysed reaction is 5-(methylsulfanyl)-D-ribulose 1-phosphate = 5-methylsulfanyl-2,3-dioxopentyl phosphate + H2O. The protein operates within amino-acid biosynthesis; L-methionine biosynthesis via salvage pathway; L-methionine from S-methyl-5-thio-alpha-D-ribose 1-phosphate: step 2/6. Catalyzes the dehydration of methylthioribulose-1-phosphate (MTRu-1-P) into 2,3-diketo-5-methylthiopentyl-1-phosphate (DK-MTP-1-P). The protein is Methylthioribulose-1-phosphate dehydratase of Aspergillus fumigatus (strain CBS 144.89 / FGSC A1163 / CEA10) (Neosartorya fumigata).